Reading from the N-terminus, the 492-residue chain is Pentatricopeptide repeat-containing protein At4g21705, mitochondrial (492 aa).

The transit peptide at 1-17 (MNILRRIPANLIASRYY) directs the protein to the mitochondrion. PPR repeat units follow at residues 125–159 (NDKT…GFVT), 160–194 (SSLT…NVAP), 195–225 (DNYS…MERR), 231–261 (DWNT…SENR), 266–296 (DGEG…EKDV), 301–335 (INQD…GNCY), 336–370 (DFRV…GKAT), and 371–405 (TPES…EVGS).

It belongs to the PPR family. P subfamily.

It localises to the mitochondrion. The sequence is that of Pentatricopeptide repeat-containing protein At4g21705, mitochondrial from Arabidopsis thaliana (Mouse-ear cress).